The following is a 310-amino-acid chain: Porphobilinogen deaminase (310 aa).

Cys-242 carries the S-(dipyrrolylmethanemethyl)cysteine modification.

The protein belongs to the HMBS family. As to quaternary structure, monomer. Dipyrromethane is required as a cofactor.

It catalyses the reaction 4 porphobilinogen + H2O = hydroxymethylbilane + 4 NH4(+). The protein operates within porphyrin-containing compound metabolism; protoporphyrin-IX biosynthesis; coproporphyrinogen-III from 5-aminolevulinate: step 2/4. Functionally, tetrapolymerization of the monopyrrole PBG into the hydroxymethylbilane pre-uroporphyrinogen in several discrete steps. In Shewanella halifaxensis (strain HAW-EB4), this protein is Porphobilinogen deaminase.